A 197-amino-acid polypeptide reads, in one-letter code: Dephospho-CoA kinase (197 aa).

In terms of domain architecture, DPCK spans 4 to 197 (LIGLTGGIAT…VLKWLKTITK (194 aa)). ATP is bound at residue 12–17 (ATGKST).

Belongs to the CoaE family.

Its subcellular location is the cytoplasm. It catalyses the reaction 3'-dephospho-CoA + ATP = ADP + CoA + H(+). Its pathway is cofactor biosynthesis; coenzyme A biosynthesis; CoA from (R)-pantothenate: step 5/5. Functionally, catalyzes the phosphorylation of the 3'-hydroxyl group of dephosphocoenzyme A to form coenzyme A. The protein is Dephospho-CoA kinase of Lactiplantibacillus plantarum (strain ATCC BAA-793 / NCIMB 8826 / WCFS1) (Lactobacillus plantarum).